The chain runs to 166 residues: MMQEESSSPVSPVDSLSNSEEELDKQQSKRGCRKRRSARKSPEDPDSPISVKRNKKASSTGSSPQSFEELQSQRVMANVRERQRTQSLNEAFSSLRKIIPTLPSDKLSKIQTLKLASRYIDFLCQVLQSDELDSKMASCSYVAHERLSYAFSVWRMEGAWSMSASH.

Over residues 1 to 18 (MMQEESSSPVSPVDSLSN) the composition is skewed to low complexity. Positions 1 to 83 (MMQEESSSPV…RVMANVRERQ (83 aa)) are disordered. Residues 28–39 (SKRGCRKRRSAR) are compositionally biased toward basic residues. A compositionally biased stretch (polar residues) spans 57 to 75 (ASSTGSSPQSFEELQSQRV). In terms of domain architecture, bHLH spans 72-123 (SQRVMANVRERQRTQSLNEAFSSLRKIIPTLPSDKLSKIQTLKLASRYIDFL).

In terms of assembly, efficient DNA binding requires dimerization with another bHLH protein. Homodimer. Subset of mesodermal cells.

It localises to the nucleus. Functionally, probable transcription factor, which may be involved, with other proteins, in establishing the pattern of cell type-specific gene expression in mesodermal cell subgroups. The chain is Twist-related protein (twist1) from Xenopus laevis (African clawed frog).